Reading from the N-terminus, the 533-residue chain is Probable protein kinase UbiB (533 aa).

The chain crosses the membrane as a helical span at residues 24-44; that stretch reads LILELPMLPWWLRLLGAALPW. Residues 126–494 form the Protein kinase domain; sequence RFEREPLASA…WKSSRHDWLG (369 aa). ATP contacts are provided by residues 132–140 and K154; that span reads LASASVAQV. D289 serves as the catalytic Proton acceptor. A helical membrane pass occupies residues 510 to 530; sequence LGQQLEAWPAWVMLAGGVFLI.

The protein belongs to the ABC1 family. UbiB subfamily.

It localises to the cell inner membrane. It participates in cofactor biosynthesis; ubiquinone biosynthesis [regulation]. Is probably a protein kinase regulator of UbiI activity which is involved in aerobic coenzyme Q (ubiquinone) biosynthesis. The chain is Probable protein kinase UbiB from Pseudomonas paraeruginosa (strain DSM 24068 / PA7) (Pseudomonas aeruginosa (strain PA7)).